Consider the following 275-residue polypeptide: Penicillin-insensitive murein endopeptidase (275 aa).

The N-terminal stretch at 1 to 19 (MKNWIVGMVALVTMVPVMA) is a signal peptide. 3 disulfide bridges follow: Cys-44–Cys-264, Cys-187–Cys-235, and Cys-216–Cys-223. Zn(2+) is bound by residues His-110, His-113, Asp-120, Asp-147, and His-211. Residues 227–262 (DTPPPGDGCGAELESWFQPPPPSAKPGKTLPPPLPP) are disordered. Residues 244-262 (QPPPPSAKPGKTLPPPLPP) show a composition bias toward pro residues.

It belongs to the peptidase M74 family. In terms of assembly, dimer. Zn(2+) serves as cofactor.

The protein localises to the periplasm. Murein endopeptidase that cleaves the D-alanyl-meso-2,6-diamino-pimelyl amide bond that connects peptidoglycan strands. Likely plays a role in the removal of murein from the sacculus. The polypeptide is Penicillin-insensitive murein endopeptidase (Yersinia pestis bv. Antiqua (strain Antiqua)).